The following is a 147-amino-acid chain: Flagellar assembly factor FliW (147 aa).

This sequence belongs to the FliW family. As to quaternary structure, interacts with translational regulator CsrA and flagellin(s).

Its subcellular location is the cytoplasm. Acts as an anti-CsrA protein, binds CsrA and prevents it from repressing translation of its target genes, one of which is flagellin. Binds to flagellin and participates in the assembly of the flagellum. This Treponema denticola (strain ATCC 35405 / DSM 14222 / CIP 103919 / JCM 8153 / KCTC 15104) protein is Flagellar assembly factor FliW.